Reading from the N-terminus, the 1571-residue chain is Pentafunctional AROM polypeptide 2 (1571 aa).

The tract at residues 1–380 (MAEPTKISIL…YEPKASVVSN (380 aa)) is 3-dehydroquinate synthase. NAD(+) is bound by residues 44-46 (DTN), 81-84 (ENSK), 112-114 (GGV), and Asp-117. Arg-128 is a 7-phospho-2-dehydro-3-deoxy-D-arabino-heptonate binding site. 137 to 138 (TT) is an NAD(+) binding site. 2 residues coordinate 7-phospho-2-dehydro-3-deoxy-D-arabino-heptonate: Asp-144 and Lys-150. NAD(+) is bound at residue Lys-159. Asn-160 contributes to the 7-phospho-2-dehydro-3-deoxy-D-arabino-heptonate binding site. NAD(+) is bound by residues 177 to 180 (FIDT) and Asn-188. Zn(2+) is bound at residue Glu-192. 7-phospho-2-dehydro-3-deoxy-D-arabino-heptonate contacts are provided by residues 192–195 (EVIK) and Lys-246. Glu-256 functions as the Proton acceptor; for 3-dehydroquinate synthase activity in the catalytic mechanism. 7-phospho-2-dehydro-3-deoxy-D-arabino-heptonate is bound by residues 260–264 (RNLLN) and His-267. Zn(2+) is bound at residue His-267. The active-site Proton acceptor; for 3-dehydroquinate synthase activity is the His-271. Residues His-283 and Lys-352 each coordinate 7-phospho-2-dehydro-3-deoxy-D-arabino-heptonate. Residue His-283 participates in Zn(2+) binding. The tract at residues 393 to 838 (VIPGVPKNLN…WDALKQKFGV (446 aa)) is EPSP synthase. Cys-820 functions as the For EPSP synthase activity in the catalytic mechanism. The shikimate kinase stretch occupies residues 859 to 1051 (NASIIIIGMR…RKKHLSFFVS (193 aa)). 866–873 (GMRGAGKT) is an ATP binding site. Positions 1052 to 1273 (LTLPDLRESG…AAPGQLSAAE (222 aa)) are 3-dehydroquinase. The active-site Proton acceptor; for 3-dehydroquinate dehydratase activity is the His-1175. The active-site Schiff-base intermediate with substrate; for 3-dehydroquinate dehydratase activity is the Lys-1203. The segment at 1286–1571 (AKKFAVLGKP…NAVLGTNETK (286 aa)) is shikimate dehydrogenase.

In the N-terminal section; belongs to the sugar phosphate cyclases superfamily. Dehydroquinate synthase family. This sequence in the 2nd section; belongs to the EPSP synthase family. The protein in the 3rd section; belongs to the shikimate kinase family. It in the 4th section; belongs to the type-I 3-dehydroquinase family. In the C-terminal section; belongs to the shikimate dehydrogenase family. As to quaternary structure, homodimer. Zn(2+) is required as a cofactor.

The protein resides in the cytoplasm. The catalysed reaction is 7-phospho-2-dehydro-3-deoxy-D-arabino-heptonate = 3-dehydroquinate + phosphate. It carries out the reaction 3-dehydroquinate = 3-dehydroshikimate + H2O. It catalyses the reaction shikimate + NADP(+) = 3-dehydroshikimate + NADPH + H(+). The enzyme catalyses shikimate + ATP = 3-phosphoshikimate + ADP + H(+). The catalysed reaction is 3-phosphoshikimate + phosphoenolpyruvate = 5-O-(1-carboxyvinyl)-3-phosphoshikimate + phosphate. It participates in metabolic intermediate biosynthesis; chorismate biosynthesis; chorismate from D-erythrose 4-phosphate and phosphoenolpyruvate: step 2/7. It functions in the pathway metabolic intermediate biosynthesis; chorismate biosynthesis; chorismate from D-erythrose 4-phosphate and phosphoenolpyruvate: step 3/7. Its pathway is metabolic intermediate biosynthesis; chorismate biosynthesis; chorismate from D-erythrose 4-phosphate and phosphoenolpyruvate: step 4/7. The protein operates within metabolic intermediate biosynthesis; chorismate biosynthesis; chorismate from D-erythrose 4-phosphate and phosphoenolpyruvate: step 5/7. It participates in metabolic intermediate biosynthesis; chorismate biosynthesis; chorismate from D-erythrose 4-phosphate and phosphoenolpyruvate: step 6/7. In terms of biological role, the AROM polypeptide catalyzes 5 consecutive enzymatic reactions in prechorismate polyaromatic amino acid biosynthesis. The chain is Pentafunctional AROM polypeptide 2 from Talaromyces marneffei (strain ATCC 18224 / CBS 334.59 / QM 7333) (Penicillium marneffei).